Consider the following 466-residue polypeptide: Asparagine--tRNA ligase (466 aa).

It belongs to the class-II aminoacyl-tRNA synthetase family. As to quaternary structure, homodimer.

The protein localises to the cytoplasm. It catalyses the reaction tRNA(Asn) + L-asparagine + ATP = L-asparaginyl-tRNA(Asn) + AMP + diphosphate + H(+). In Psychromonas ingrahamii (strain DSM 17664 / CCUG 51855 / 37), this protein is Asparagine--tRNA ligase.